The chain runs to 392 residues: Phosphoglycerate kinase (392 aa).

Substrate-binding positions include 21–23 (DMN), Arg36, 59–62 (HLGR), Arg114, and Arg147. ATP-binding positions include Lys198, Glu320, and 346 to 349 (GGDT).

This sequence belongs to the phosphoglycerate kinase family. In terms of assembly, monomer.

The protein localises to the cytoplasm. The catalysed reaction is (2R)-3-phosphoglycerate + ATP = (2R)-3-phospho-glyceroyl phosphate + ADP. It functions in the pathway carbohydrate degradation; glycolysis; pyruvate from D-glyceraldehyde 3-phosphate: step 2/5. The sequence is that of Phosphoglycerate kinase from Neisseria meningitidis serogroup C (strain 053442).